The chain runs to 261 residues: Methyltransferase nsrG (261 aa).

Positions 49 to 141 are methyltransferase domain; sequence DVGAGNGPYA…AHQLRPGALF (93 aa).

This sequence belongs to the methyltransferase superfamily.

It participates in secondary metabolite biosynthesis. Methyltransferase; part of the gene cluster that mediates the biosynthesis of the tetrahydroxanthone dimer neosartorin, which exhibits antibacterial activity. The two different monomeric units appear to be synthesized by the same set of enzymes, among which the Baeyer-Villiger monooxygenase nsrF is the key enzyme for the divergence of the biosynthetic routes. The pathway begins with the synthesis of atrochrysone thioester by the polyketide synthase nsrB. The atrochrysone carboxyl ACP thioesterase nsrC then breaks the thioester bond and releases the atrochrysone carboxylic acid from AacuL. Atrochrysone carboxylic acid is decarboxylated by the decarboxylase nsrE, and oxidized by the anthrone oxygenase nsrD to yield emodin. Emodin is then reduced to emodin hydroquinone by the oxidoreductase nsrR. A-ring reduction by the short chain dehydrogenase nsrJ, dehydration by the scytalone dehydratase-like protein nsrI and probable spontaneous re-oxidation, results in overall deoxygenation to chrysophanol. The Baeyer-Villiger monooxygenase nsrF accepts chrysophanol as a substrate to insert one oxygen atom at two different positions to yield the precursors of both monomric units. NsrF is promiscuous/flexible in interacting with the 2 (non methylated and methylated) aromatic rings of chrysophanol, thus diverging the biosynthetic pathway at this point. After the hydrolysis of the lactones, methylesterification by the methyltransferase nsrG yields respectively moniliphenone and 2,2',6'-trihydroxy-4-methyl-6-methoxya-cyldiphenylmethanone. The next steps are the hydroxylation by the FAD-dependent monooxygenase nsrK, followed by isomerization by the monooxygenase nsrQ. The short chain dehydrogenase/reductase nsrO then catalyzes the C-5 ketoreduction to give the xanthone skeleton of blennolide C and 5-acetylblennolide A. The acetyltransferase nsrL has a strict substrate specificity and uses only blennolide A but not blennolide C to yield 5-acetylblennolide A as the single-acetylated product. In the final step of the biosynthesis, the heterodimerization of the 2 xanthones, blennolide C and 5-acetylblennolide A, is catalyzed by the cytochrome P450 monooxygenase nsrP. NsrP can utilize at least three different xanthones as its substrates to perform the dimerization reaction. The chain is Methyltransferase nsrG from Aspergillus novofumigatus (strain IBT 16806).